A 676-amino-acid chain; its full sequence is RNA helicase NPH-II (676 aa).

In terms of domain architecture, Helicase ATP-binding spans 172–347; it reads FSAWISHRPV…VFLPNPAFIH (176 aa). An ATP-binding site is contributed by 185–192; sequence GGTGVGKT. Residues 296-299 carry the DEXH box motif; that stretch reads DEVH. The 170-residue stretch at 366–535 folds into the Helicase C-terminal domain; the sequence is NPSSRMAYIE…NYILYANKFN (170 aa).

Belongs to the DEAD box helicase family. DEAH subfamily. In terms of assembly, monomer.

It is found in the virion. It carries out the reaction ATP + H2O = ADP + phosphate + H(+). NTP-dependent helicase that catalyzes unidirectional unwinding of 3'tailed duplex RNAs and plays an important role during transcription of early mRNAs, presumably by preventing R-loop formation behind the elongating RNA polymerase. Might also play a role in the export of newly synthesized mRNA chains out of the core into the cytoplasm. Required for replication and propagation of viral particles. The chain is RNA helicase NPH-II (OPG084) from Bos taurus (Bovine).